Consider the following 430-residue polypeptide: Adenylosuccinate synthetase (430 aa).

GTP-binding positions include 12–18 (GDEGKGK) and 40–42 (GHT). The Proton acceptor role is filled by Asp-13. Asp-13 and Gly-40 together coordinate Mg(2+). Residues 13–16 (DEGK), 38–41 (NAGH), Thr-128, Arg-142, Gln-223, Thr-238, and Arg-302 contribute to the IMP site. His-41 functions as the Proton donor in the catalytic mechanism. 298 to 304 (TTTGRPR) serves as a coordination point for substrate. Residues Arg-304, 330-332 (SID), and 413-415 (SVG) contribute to the GTP site.

It belongs to the adenylosuccinate synthetase family. Homodimer. The cofactor is Mg(2+).

Its subcellular location is the cytoplasm. It carries out the reaction IMP + L-aspartate + GTP = N(6)-(1,2-dicarboxyethyl)-AMP + GDP + phosphate + 2 H(+). It participates in purine metabolism; AMP biosynthesis via de novo pathway; AMP from IMP: step 1/2. Functionally, plays an important role in the de novo pathway of purine nucleotide biosynthesis. Catalyzes the first committed step in the biosynthesis of AMP from IMP. This Lactococcus lactis subsp. cremoris (strain MG1363) protein is Adenylosuccinate synthetase.